A 1115-amino-acid chain; its full sequence is PAN2-PAN3 deadenylation complex catalytic subunit PAN2 (1115 aa).

5 WD repeats span residues 27–66 (NRDK…YTRY), 112–153 (AAFS…GCLD), 155–194 (LLNY…TIKS), 197–236 (AHSA…YDLR), and 295–334 (HPCQ…MGMF). The segment at 337–473 (TPEMLAYPDY…IQTYTSINKY (137 aa)) is linker. Residues 474-855 (EVPPAYSRLP…TPEIIIYCDA (382 aa)) form the USP domain. The Zn(2+) site is built by Cys-660, His-662, Cys-713, and Cys-716. An Exonuclease domain is found at 907–1079 (VAIDAEFVSL…EDAHTALILY (173 aa)). Positions 910, 912, 1020, and 1071 each coordinate a divalent metal cation.

The protein belongs to the peptidase C19 family. PAN2 subfamily. As to quaternary structure, forms a heterotrimer with an asymmetric homodimer of the regulatory subunit PAN3 to form the poly(A)-nuclease (PAN) deadenylation complex. It depends on a divalent metal cation as a cofactor.

The protein resides in the cytoplasm. It catalyses the reaction Exonucleolytic cleavage of poly(A) to 5'-AMP.. Its activity is regulated as follows. Positively regulated by the regulatory subunit PAN3. Negatively regulated by PAB1-binding protein PBP1. Inhibited under stress conditions. Inhibition of deadenylation under stress increases mRNA stability, which may be a mechanism to retain the majority of the cytoplasmic pool of mRNAs for later reuse and recovery from stress. Catalytic subunit of the poly(A)-nuclease (PAN) deadenylation complex, one of two cytoplasmic mRNA deadenylases involved in mRNA turnover. PAN specifically shortens poly(A) tails of RNA and the activity is stimulated by poly(A)-binding protein PAB1. PAN deadenylation is followed by rapid degradation of the shortened mRNA tails by the CCR4-NOT complex. Deadenylated mRNAs are then degraded by two alternative mechanisms, namely exosome-mediated 3'-5' exonucleolytic degradation, or deadenylation-dependent mRNA decaping by DCP1-DCP2 and subsequent 5'-3' exonucleolytic degradation by XRN1. May also be involved in post-transcriptional maturation of mRNA poly(A) tails, trimming the tails from their synthesized length to the slightly shorter, apparently messenger-specific length found on newly exported mRNAs. PAN cooperates with protein kinase DUN1 in the regulation of RAD5 mRNA levels and cell survival in response to replicational stress. The chain is PAN2-PAN3 deadenylation complex catalytic subunit PAN2 from Saccharomyces cerevisiae (strain ATCC 204508 / S288c) (Baker's yeast).